The sequence spans 213 residues: Small ribosomal subunit protein eS1 (213 aa).

Residues 189–213 (ARPEEVAAEEETAVDVDEEDVDVEA) form a disordered region. Over residues 194 to 213 (VAAEEETAVDVDEEDVDVEA) the composition is skewed to acidic residues.

It belongs to the eukaryotic ribosomal protein eS1 family.

The protein is Small ribosomal subunit protein eS1 of Haloarcula marismortui (strain ATCC 43049 / DSM 3752 / JCM 8966 / VKM B-1809) (Halobacterium marismortui).